The sequence spans 375 residues: Alanine racemase (375 aa).

The active-site Proton acceptor; specific for D-alanine is the lysine 35. An N6-(pyridoxal phosphate)lysine modification is found at lysine 35. Residue arginine 133 coordinates substrate. Tyrosine 261 serves as the catalytic Proton acceptor; specific for L-alanine. Methionine 309 is a binding site for substrate.

It belongs to the alanine racemase family. The cofactor is pyridoxal 5'-phosphate.

The catalysed reaction is L-alanine = D-alanine. Its pathway is amino-acid biosynthesis; D-alanine biosynthesis; D-alanine from L-alanine: step 1/1. Catalyzes the interconversion of L-alanine and D-alanine. May also act on other amino acids. This Syntrophobacter fumaroxidans (strain DSM 10017 / MPOB) protein is Alanine racemase (alr).